The chain runs to 226 residues: PKHD-type hydroxylase Bpet2704 (226 aa).

Positions 78–178 (KIFPPLFNRY…RISAFFWMQS (101 aa)) constitute a Fe2OG dioxygenase domain. Fe cation is bound by residues His96, Asp98, and His159. Residue Arg169 participates in 2-oxoglutarate binding.

It depends on Fe(2+) as a cofactor. The cofactor is L-ascorbate.

The chain is PKHD-type hydroxylase Bpet2704 from Bordetella petrii (strain ATCC BAA-461 / DSM 12804 / CCUG 43448).